The primary structure comprises 274 residues: Thiamine kinase (274 aa).

The protein belongs to the thiamine kinase family.

The catalysed reaction is thiamine + ATP = thiamine phosphate + ADP + H(+). It participates in cofactor biosynthesis; thiamine diphosphate biosynthesis; thiamine phosphate from thiamine: step 1/1. Its function is as follows. Catalyzes the ATP-dependent phosphorylation of thiamine to thiamine phosphate. Is involved in thiamine salvage. This is Thiamine kinase from Salmonella heidelberg (strain SL476).